We begin with the raw amino-acid sequence, 780 residues long: Molybdenum cofactor sulfurase (780 aa).

N6-(pyridoxal phosphate)lysine is present on lysine 246. The active site involves cysteine 413. Positions 635 to 780 (LRLLRQSGQR…MTCGDVVLVE (146 aa)) constitute an MOSC domain. Serine 734 bears the Phosphoserine mark.

Belongs to the class-V pyridoxal-phosphate-dependent aminotransferase family. MOCOS subfamily. Pyridoxal 5'-phosphate is required as a cofactor.

It carries out the reaction Mo-molybdopterin + L-cysteine + AH2 = thio-Mo-molybdopterin + L-alanine + A + H2O. Functionally, sulfurates the molybdenum cofactor. Sulfation of molybdenum is essential for xanthine dehydrogenase (XDH) and aldehyde oxidase (ADO) enzymes in which molybdenum cofactor is liganded by 1 oxygen and 1 sulfur atom in active form. This Drosophila yakuba (Fruit fly) protein is Molybdenum cofactor sulfurase.